The following is a 559-amino-acid chain: 2-isopropylmalate synthase (559 aa).

The Pyruvate carboxyltransferase domain occupies P33–D307. Mg(2+) contacts are provided by D42, H246, H248, and N282. The regulatory domain stretch occupies residues A439 to A559.

This sequence belongs to the alpha-IPM synthase/homocitrate synthase family. LeuA type 2 subfamily. As to quaternary structure, homodimer. Requires Mg(2+) as cofactor.

It is found in the cytoplasm. It carries out the reaction 3-methyl-2-oxobutanoate + acetyl-CoA + H2O = (2S)-2-isopropylmalate + CoA + H(+). Its pathway is amino-acid biosynthesis; L-leucine biosynthesis; L-leucine from 3-methyl-2-oxobutanoate: step 1/4. Catalyzes the condensation of the acetyl group of acetyl-CoA with 3-methyl-2-oxobutanoate (2-ketoisovalerate) to form 3-carboxy-3-hydroxy-4-methylpentanoate (2-isopropylmalate). The sequence is that of 2-isopropylmalate synthase from Pseudomonas fluorescens (strain Pf0-1).